Consider the following 318-residue polypeptide: Pheromone-regulated membrane protein 5 (318 aa).

The tract at residues 15–56 is disordered; it reads TTSTSSTTTASSSSTITSVXSSSSSLPLLSNSTSSSIIPSIT. Residues 78–98 form a helical membrane-spanning segment; it reads FIVVGGIAGVIFLAILLWWVI. Residue Ser-129 is modified to Phosphoserine. A compositionally biased stretch (low complexity) spans 238–247; sequence TISSSSASSL. The tract at residues 238-318 is disordered; that stretch reads TISSSSASSL…HMLEGKEQDE (81 aa). A compositionally biased stretch (basic and acidic residues) spans 250 to 261; that stretch reads GNEKEVGEDIRK. Over residues 276–285 the composition is skewed to polar residues; sequence SPESDGSVNR. A phosphoserine mark is found at Ser-279, Ser-282, and Ser-288. Residues 309-318 are compositionally biased toward basic and acidic residues; the sequence is HMLEGKEQDE. Lys-314 participates in a covalent cross-link: Glycyl lysine isopeptide (Lys-Gly) (interchain with G-Cter in ubiquitin).

Belongs to the PRM5 family.

It localises to the membrane. In Saccharomyces cerevisiae (strain Lalvin QA23) (Baker's yeast), this protein is Pheromone-regulated membrane protein 5 (PRM5).